We begin with the raw amino-acid sequence, 917 residues long: DNA repair endonuclease XPF (917 aa).

The helicase-like stretch occupies residues 1 to 457 (MEPGLSGERR…EVWVNVRKGD (457 aa)). 2 leucine-zipper regions span residues 233–254 (LNACLKELKCHNPSLEVEDLSL) and 270–298 (LDPLWHQLGAKTKSLVQDLKILRTLLQYL). An N6-acetyllysine modification is found at K289. A compositionally biased stretch (basic and acidic residues) spans 454–479 (RKGDGPKRTTKSDKRPKAAPNKERAS). Disordered stretches follow at residues 454–524 (RKGD…SSPE) and 643–681 (VPEEREGRDETNLDLARGSAALDAPTDTRKAGGQEQNGT). A Nuclear localization signal motif is present at residues 487–492 (KRKKQE). Residues 507-516 (EDKALEEDLC) are compositionally biased toward basic and acidic residues. Phosphoserine is present on S522. A compositionally biased stretch (basic and acidic residues) spans 643–653 (VPEEREGRDET). Residues 659 to 814 (RGSAALDAPT…PSPHATAELF (156 aa)) are nuclease. The ERCC4 domain occupies 684-764 (SIVVDMREFR…RPVLLIEFDP (81 aa)). S765 bears the Phosphoserine mark. Positions 838-906 (TLPESDRYNP…QLHDFLHTAY (69 aa)) are hhH2, dimerization with ERCC1. K912 carries the N6-acetyllysine modification.

This sequence belongs to the XPF family. In terms of assembly, heterodimer composed of ERCC1 and ERCC4/XPF. Interacts with SLX4/BTBD12; this interaction is direct and links the ERCC1-ERCC4/XPF complex to SLX4, which may coordinate the action of the structure-specific endonuclease during DNA repair. Mg(2+) serves as cofactor. In terms of processing, acetylation at Lys-912 by KAT5 promotes interaction with ERCC1 by disrupting a salt bridge between Asp-908 and Lys-912, thereby exposing a second binding site for ERCC1. Deacetylated by SIRT1.

The protein localises to the nucleus. Its subcellular location is the chromosome. Functionally, catalytic component of a structure-specific DNA repair endonuclease responsible for the 5-prime incision during DNA repair, and which is essential for nucleotide excision repair (NER) and interstrand cross-link (ICL) repair. The protein is DNA repair endonuclease XPF of Mus musculus (Mouse).